We begin with the raw amino-acid sequence, 112 residues long: uncharacterized protein (112 aa).

Residues 62–82 (THSFIFFILFLFIFIFLTFSH) traverse the membrane as a helical segment.

It is found in the membrane. This is an uncharacterized protein from Saccharomyces cerevisiae (strain ATCC 204508 / S288c) (Baker's yeast).